Reading from the N-terminus, the 305-residue chain is MASAFRSSTRLILVLGILILCSVSSVRSWSKEGHILTCRIAQNLLEAGPAHVVENLLPDYVKGDLSALCVWPDQIRHWYKYRWTSHLHYIDTPDQACSYEYSRDCHDQHGLKDMCVDGAIQNFTSQLQHYGEGTSDRRYNMTEALLFLSHFMGDIHQPMHVGFTSDEGGNTIDLRWYKHKSNLHHVWDREIILTALKENYDKNLDLLQEDLEKNITNGLWHDDLSSWTECNDLIACPHKYASESIKLACKWGYKGVKSGETLSEEYFNTRLPIVMKRIVQGGVRLAMILNRVFSDDHAIAGVAAT.

The first 28 residues, 1–28, serve as a signal peptide directing secretion; it reads MASAFRSSTRLILVLGILILCSVSSVRS. Residues W29 and H34 each coordinate a divalent metal cation. 29 to 34 provides a ligand contact to substrate; the sequence is WSKEGH. C38 and C69 are joined by a disulfide. A divalent metal cation is bound by residues D73 and H88. Substrate contacts are provided by residues 73–79, 88–91, and 98–103; these read DQIRHWY, HYID, and SYEYSR. Intrachain disulfides connect C97-C249, C105-C115, and C230-C236. 2 residues coordinate substrate: N122 and Y139. N-linked (GlcNAc...) asparagine glycosylation is present at N122. An N-linked (GlcNAc...) asparagine glycan is attached at N140. A divalent metal cation-binding residues include H150, D154, H160, H184, and D188. The tract at residues 150–199 is substrate binding; it reads HFMGDIHQPMHVGFTSDEGGNTIDLRWYKHKSNLHHVWDREIILTALKEN. N-linked (GlcNAc...) asparagine glycosylation is present at N214. Residues 287–305 constitute a propeptide, removed in mature form; sequence MILNRVFSDDHAIAGVAAT.

Belongs to the nuclease type I family. As to quaternary structure, monomer. Requires Mn(2+) as cofactor. Ca(2+) is required as a cofactor. In terms of tissue distribution, mostly expressed in flowers and during leaf and stem senescence, and, to a lower extent, detectable at low levels in roots, leaves, and stems. Particularly expressed in senescing tissues in a NAC92/ORE1-dependent manner.

It carries out the reaction Endonucleolytic cleavage to 5'-phosphomononucleotide and 5'-phosphooligonucleotide end-products.. Functionally, endonuclease that can use RNA, single-stranded and double-stranded DNA as substrates. Hydrolyzes single-stranded DNA and RNA without apparent specificity for bases during senescence. Endonuclease that recognizes and cleaves all types of mismatches with high efficiency, including heteroduplex double-stranded DNA. Maybe involved in programmed cell death (PCD) and senescence. The chain is Endonuclease 1 from Arabidopsis thaliana (Mouse-ear cress).